The sequence spans 567 residues: Hydroxylamine reductase 2 (567 aa).

Residues Cys5, Cys8, Cys17, and Cys23 each coordinate [4Fe-4S] cluster. Hybrid [4Fe-2O-2S] cluster-binding residues include His262, Glu286, Cys330, Cys421, Cys449, Cys474, Glu509, and Lys511. A Cysteine persulfide modification is found at Cys421.

This sequence belongs to the HCP family. Requires [4Fe-4S] cluster as cofactor. It depends on hybrid [4Fe-2O-2S] cluster as a cofactor.

It is found in the cytoplasm. The catalysed reaction is A + NH4(+) + H2O = hydroxylamine + AH2 + H(+). Its function is as follows. Catalyzes the reduction of hydroxylamine to form NH(3) and H(2)O. The chain is Hydroxylamine reductase 2 from Clostridium acetobutylicum (strain ATCC 824 / DSM 792 / JCM 1419 / IAM 19013 / LMG 5710 / NBRC 13948 / NRRL B-527 / VKM B-1787 / 2291 / W).